A 1343-amino-acid chain; its full sequence is DNA-directed RNA polymerase subunit beta (1343 aa).

This sequence belongs to the RNA polymerase beta chain family. As to quaternary structure, the RNAP catalytic core consists of 2 alpha, 1 beta, 1 beta' and 1 omega subunit. When a sigma factor is associated with the core the holoenzyme is formed, which can initiate transcription.

It carries out the reaction RNA(n) + a ribonucleoside 5'-triphosphate = RNA(n+1) + diphosphate. Its function is as follows. DNA-dependent RNA polymerase catalyzes the transcription of DNA into RNA using the four ribonucleoside triphosphates as substrates. The protein is DNA-directed RNA polymerase subunit beta of Shewanella pealeana (strain ATCC 700345 / ANG-SQ1).